Here is a 235-residue protein sequence, read N- to C-terminus: Sugar fermentation stimulation protein homolog (235 aa).

Belongs to the SfsA family.

In Aliivibrio salmonicida (strain LFI1238) (Vibrio salmonicida (strain LFI1238)), this protein is Sugar fermentation stimulation protein homolog.